The following is a 780-amino-acid chain: ATP-dependent DNA helicase RecG (780 aa).

3 domain regions span residues 1-350 (MLCS…GGIP), 351-549 (KKIE…EMPP), and 550-780 (GRKE…IEVG). Residues 154–252 (RKIFKLNDLL…VTPKEGEYVR (99 aa)) form a wedge domain region. The ATP site is built by F367, L369, G399, S400, G401, K402, T403, and R436. The Helicase ATP-binding domain maps to 383–544 (DMISEKPMNR…FYGDLDVTVI (162 aa)). Positions 497 to 500 (DEQH) match the DEAH box motif. One can recognise a Helicase C-terminal domain in the interval 563–728 (RVNEVYEFVR…EYDLKTRGPG (166 aa)).

This sequence belongs to the helicase family. RecG subfamily. Monomer.

The catalysed reaction is Couples ATP hydrolysis with the unwinding of duplex DNA by translocating in the 3'-5' direction.. It catalyses the reaction ATP + H2O = ADP + phosphate + H(+). Its function is as follows. Plays a critical role in recombination and DNA repair. Helps process Holliday junction intermediates to mature products by catalyzing branch migration. Has replication fork (Y-DNA) regression activity, unwinds stalled or blocked replication forks to make a HJ that can be resolved. Has a DNA unwinding activity characteristic of a DNA helicase with 3'-5' polarity. Might be a DNA translocase rather than a bona fide helicase. This is ATP-dependent DNA helicase RecG from Thermotoga maritima (strain ATCC 43589 / DSM 3109 / JCM 10099 / NBRC 100826 / MSB8).